We begin with the raw amino-acid sequence, 167 residues long: Protein archease (167 aa).

Residue Ala-2 is modified to N-acetylalanine. Residues Asp-39, Asp-166, and Ile-167 each contribute to the Ca(2+) site.

This sequence belongs to the archease family. In terms of assembly, component of the tRNA-splicing ligase complex.

Functionally, component of the tRNA-splicing ligase complex required to facilitate the enzymatic turnover of catalytic subunit RTCB. Together with DDX1, acts by facilitating the guanylylation of RTCB, a key intermediate step in tRNA ligation. The sequence is that of Protein archease (ZBTB8OS) from Bos taurus (Bovine).